Reading from the N-terminus, the 130-residue chain is MAKKSVTKKKNVKKNIARGIVCISASFNNTNVTITDEMGNVLCWATAGGLGFKGSKKSTPYAAQQAVESAMEKAKEHGIKEVGIKVQGPGSGRETAVKSVGAVEGIKVLWLKDITPLPHNGCRPPKRRRV.

The protein belongs to the universal ribosomal protein uS11 family. As to quaternary structure, part of the 30S ribosomal subunit. Interacts with proteins S7 and S18. Binds to IF-3.

Located on the platform of the 30S subunit, it bridges several disparate RNA helices of the 16S rRNA. Forms part of the Shine-Dalgarno cleft in the 70S ribosome. The polypeptide is Small ribosomal subunit protein uS11 (Helicobacter hepaticus (strain ATCC 51449 / 3B1)).